A 197-amino-acid chain; its full sequence is Putative manganese efflux pump MntP 1 (197 aa).

6 helical membrane-spanning segments follow: residues 8-28, 43-63, 66-86, 123-143, 146-166, and 176-196; these read VILL…GLGA, VYAA…GYLL, VLLG…LILL, LAIA…LLAL, WLAC…GIYL, and DKAE…VMFI.

It belongs to the MntP (TC 9.B.29) family.

It is found in the cell inner membrane. Probably functions as a manganese efflux pump. The chain is Putative manganese efflux pump MntP 1 from Psychrobacter cryohalolentis (strain ATCC BAA-1226 / DSM 17306 / VKM B-2378 / K5).